Here is a 303-residue protein sequence, read N- to C-terminus: Ubiquinone biosynthesis protein COQ4, mitochondrial (303 aa).

Zn(2+) contacts are provided by histidine 191, aspartate 192, histidine 195, and glutamate 207.

The protein belongs to the COQ4 family. Component of a multi-subunit COQ enzyme complex, composed of at least COQ3, COQ4, COQ5, COQ6, COQ7 and COQ9. Zn(2+) serves as cofactor.

Its subcellular location is the mitochondrion inner membrane. It carries out the reaction a 4-hydroxy-3-methoxy-5-(all-trans-polyprenyl)benzoate + H(+) = a 2-methoxy-6-(all-trans-polyprenyl)phenol + CO2. It participates in cofactor biosynthesis; ubiquinone biosynthesis. In terms of biological role, lyase that catalyzes the C1-decarboxylation of 4-hydroxy-3-methoxy-5-(all-trans-polyprenyl)benzoic acid into 2-methoxy-6-(all-trans-polyprenyl)phenol during ubiquinone biosynthesis. The chain is Ubiquinone biosynthesis protein COQ4, mitochondrial from Komagataella phaffii (strain GS115 / ATCC 20864) (Yeast).